The primary structure comprises 611 residues: Brain-enriched guanylate kinase-associated protein (611 aa).

Phosphotyrosine is present on Tyr156. Ser219, Ser248, and Ser265 each carry phosphoserine. Thr268 carries the phosphothreonine modification. A phosphoserine mark is found at Ser284, Ser364, and Ser391. Asymmetric dimethylarginine is present on Arg399. A phosphoserine mark is found at Ser474, Ser484, Ser494, Ser496, Ser519, Ser521, and Ser525. A disordered region spans residues 520–611 (LSPSRSADPL…KAQLYGTLLN (92 aa)). The segment covering 554 to 563 (EPEHGSRDSL) has biased composition (basic and acidic residues). Phosphoserine occurs at positions 571 and 581.

As to quaternary structure, interacts with DLG4 and DLGAP1 and forms a ternary complex. As to expression, brain-specific. Expressed in neurons and rather enriched at synaptic junctions.

It localises to the cytoplasm. It is found in the membrane. May sustain the structure of the postsynaptic density (PSD). The chain is Brain-enriched guanylate kinase-associated protein (Begain) from Rattus norvegicus (Rat).